The following is a 347-amino-acid chain: uncharacterized protein (347 aa).

Transmembrane regions (helical) follow at residues 6–26 (GSASQLAFVYVGTVVGAGFAT), 37–57 (FGWFGFFGILVSGGMFTLLGA), 90–110 (FMLFVLLGVTSVMLSGAGALF), 114–134 (LGMSAQIGMLITIGLSLIVMT), 140–160 (IFGVNVFVVPLLIIFSMIVVA), 182–202 (WLLSAVSYGALNLSLAQAVLV), 217–237 (GALIGGTMLTIVLSASFLSLS), 262–282 (LIYLLIIFGEVFTSVIGNLYG), 289–309 (SFLPVKSKYIFAAIMITAYIT), and 317–337 (LISTIYPLFGYVSLAFIGALL).

The protein localises to the cell membrane. This is an uncharacterized protein from Bacillus subtilis (strain 168).